Reading from the N-terminus, the 232-residue chain is Protein TIFY 10c (232 aa).

Residues 54–73 (PPAAGAGGAFRPPPTTMNLL) are disordered. The Tify domain maps to 114–149 (AGEKAQQLTIFYGGKVVVFENFPSTKVKDLLQIVST). The interval 151–176 (DGVDKNTGTAATQSLPRPAHNSLPDL) is disordered. Over residues 156-165 (NTGTAATQSL) the composition is skewed to polar residues. The short motif at 177–202 (PIARRNSLHRFLEKRKGRMNANAPYQ) is the Jas element. Positions 179 to 186 (ARRNSLHR) match the Nuclear localization signal motif.

This sequence belongs to the TIFY/JAZ family. In terms of assembly, interacts with BHLH148. Interacts with COI1B in a coronatine-dependent manner. Coronatine is an analog of jasmonoyl isoleucine (JA-Ile). Interacts with TIFY5/JAZ2, TIFY6B/JAZ4, TIFY9/JAZ5, TIFY11A, TIFY11D/JAZ12 and TIFY11G/JAZ15. Ubiquitinated. Increase in jasmonoyl isoleucine (JA-Ile) levels mediates its degradation via COI1B-mediated proteasome pathway.

Its subcellular location is the nucleus. The protein localises to the cytoplasm. The protein resides in the cytosol. In terms of biological role, repressor of jasmonate (JA) responses. Acts as a repressor of JA-induced resistance to the bacterial blight pathogen Xanthomonas oryzae pv. oryzae (Xoo). Regulates JA-induced accumulation of linalool at the transcriptional level of linalool synthase gene LIS. Linalool is important for resistance to bacterial blight pathogen Xoo. The chain is Protein TIFY 10c from Oryza sativa subsp. indica (Rice).